The sequence spans 51 residues: Large ribosomal subunit protein eL40 (51 aa).

This sequence belongs to the eukaryotic ribosomal protein eL40 family.

The sequence is that of Large ribosomal subunit protein eL40 from Thermococcus gammatolerans (strain DSM 15229 / JCM 11827 / EJ3).